We begin with the raw amino-acid sequence, 584 residues long: Insulin-like growth factor 2 mRNA-binding protein 3 (584 aa).

2 consecutive RRM domains span residues 2–75 (NKLY…HSVP) and 81–156 (RKLQ…YIPD). Residues 160 to 199 (AQQPPQQHPQGRRGFGQRGPPRQGSPSATTRQKPQSDVPL) form a disordered region. The segment covering 184–194 (SPSATTRQKPQ) has biased composition (polar residues). 4 KH domains span residues 196–261 (DVPL…CKII), 277–344 (EIPL…EEEI), 409–474 (SETV…QGRI), and 491–557 (KLEA…QRKI).

Belongs to the RRM IMP/VICKZ family. Homodimer and multimer.

The protein localises to the cytoplasm. It localises to the nucleus. Its subcellular location is the P-body. It is found in the stress granule. Its function is as follows. RNA-binding factor that may recruit target transcripts to cytoplasmic protein-RNA complexes (mRNPs). This transcript 'caging' into mRNPs allows mRNA transport and transient storage. It also modulates the rate and location at which target transcripts encounter the translational apparatus and shields them from endonuclease attacks or microRNA-mediated degradation. Preferentially binds to N6-methyladenosine (m6A)-containing mRNAs and increases their stability. In Gallus gallus (Chicken), this protein is Insulin-like growth factor 2 mRNA-binding protein 3 (IGF2BP3).